The primary structure comprises 215 residues: ER lumen protein-retaining receptor 3 (215 aa).

Residues 1 to 4 (MNIF) are Lumenal-facing. Residues 5–24 (RLSGDVCHLIAIIILFLKIW) traverse the membrane as a helical segment. Residues 25–32 (RSKSCAGI) are Cytoplasmic-facing. The helical transmembrane segment at 33–52 (SGKSQVLFALVFTTRYLDLF) threads the bilayer. Residues 47–48 (RY) form an interaction with the K-D-E-L motif on target proteins region. Topologically, residues 53-58 (TSYISA) are lumenal. A helical transmembrane segment spans residues 59–79 (YNTVMKVVYLLLAYSTVGLIF). Residues 80-92 (FRFRNSYDSESDS) lie on the Cytoplasmic side of the membrane. Residues 93 to 110 (FRVEFLLVPVAGLSFLEN) traverse the membrane as a helical segment. Topologically, residues 111–116 (YAFTPL) are lumenal. The chain crosses the membrane as a helical span at residues 117–135 (EILWTFSIYLESVAILPQL). Residues 136-149 (FMITKTGEAESITA) lie on the Cytoplasmic side of the membrane. The chain crosses the membrane as a helical span at residues 150–168 (HYLLFLGLYRALYLANWLW). The interaction with the K-D-E-L motif on target proteins stretch occupies residues 159 to 169 (RALYLANWLWR). At 169-178 (RFHTEGFYDQ) the chain is on the lumenal side. A helical transmembrane segment spans residues 179-199 (IAVVSGVVQTIFYCDFFYLYF). Residues 200–215 (TRVLRGSGKMSLPMPV) lie on the Cytoplasmic side of the membrane. Residues 204–208 (RGSGK) are important for recycling of cargo proteins with the sequence motif K-D-E-L from the Golgi to the endoplasmic reticulum.

Belongs to the ERD2 family.

It localises to the endoplasmic reticulum membrane. Its subcellular location is the golgi apparatus membrane. The protein resides in the cytoplasmic vesicle. The protein localises to the COPI-coated vesicle membrane. Its function is as follows. Receptor for the C-terminal sequence motif K-D-E-L that is present on endoplasmic reticulum resident proteins and that mediates their recycling from the Golgi back to the endoplasmic reticulum. The polypeptide is ER lumen protein-retaining receptor 3 (kdelr3) (Danio rerio (Zebrafish)).